A 111-amino-acid chain; its full sequence is Cell division topological specificity factor (111 aa).

The protein belongs to the MinE family.

Its function is as follows. Prevents the cell division inhibition by proteins MinC and MinD at internal division sites while permitting inhibition at polar sites. This ensures cell division at the proper site by restricting the formation of a division septum at the midpoint of the long axis of the cell. This chain is Cell division topological specificity factor, found in Prochlorococcus marinus (strain MIT 9312).